We begin with the raw amino-acid sequence, 324 residues long: 4-diphosphocytidyl-2-C-methyl-D-erythritol kinase (324 aa).

Lys11 is a catalytic residue. ATP is bound at residue 108–118; that stretch reads PIGAGLAGGST. Asp150 is an active-site residue.

This sequence belongs to the GHMP kinase family. IspE subfamily.

The enzyme catalyses 4-CDP-2-C-methyl-D-erythritol + ATP = 4-CDP-2-C-methyl-D-erythritol 2-phosphate + ADP + H(+). The protein operates within isoprenoid biosynthesis; isopentenyl diphosphate biosynthesis via DXP pathway; isopentenyl diphosphate from 1-deoxy-D-xylulose 5-phosphate: step 3/6. Its function is as follows. Catalyzes the phosphorylation of the position 2 hydroxy group of 4-diphosphocytidyl-2C-methyl-D-erythritol. The sequence is that of 4-diphosphocytidyl-2-C-methyl-D-erythritol kinase from Cyanothece sp. (strain PCC 7425 / ATCC 29141).